The primary structure comprises 1938 residues: Myosin-1 (1938 aa).

The 50-residue stretch at 33–82 folds into the Myosin N-terminal SH3-like domain; the sequence is DAKTSVFVADPKESFVKATVQSREGGKVTAKTEAGATVTVKEDQVFPMNP. A phosphothreonine mark is found at Thr-64 and Thr-69. One can recognise a Myosin motor domain in the interval 86–781; the sequence is DKIEDMAMMT…LLGLLEEMRD (696 aa). Lys-130 carries the post-translational modification N6,N6,N6-trimethyllysine. 179–186 is an ATP binding site; sequence GESGAGKT. Tyr-389 is subject to Phosphotyrosine. Thr-419 carries the phosphothreonine modification. Tyr-424 bears the Phosphotyrosine mark. Ser-625 bears the Phosphoserine mark. Residues 658–680 form an actin-binding region; that stretch reads LNKLMTNLRSTHPHFVRCIIPNE. Pros-methylhistidine is present on His-756. The interval 760–774 is actin-binding; sequence KFGHTKVFFKAGLLG. Positions 784-813 constitute an IQ domain; it reads LAQLITRTQARCRGFLARVEYQKMVERRES. Residues 842 to 1938 are a coiled coil; that stretch reads LLKSAETEKE…EVHTKIISEE (1097 aa). Ser-1091 and Ser-1095 each carry phosphoserine. 2 disordered regions span residues 1124 to 1146 and 1152 to 1171; these read EIEA…SREL and RLEE…KKRE. Residues 1127–1146 show a composition bias toward basic and acidic residues; it reads AERASRAKAEKQRSDLSREL. 2 positions are modified to phosphoserine: Ser-1161 and Ser-1236. Position 1240 is a phosphothreonine (Thr-1240). Phosphoserine occurs at positions 1242 and 1260. 2 positions are modified to phosphothreonine: Thr-1264 and Thr-1285. 4 positions are modified to phosphoserine: Ser-1287, Ser-1291, Ser-1302, and Ser-1305. At Tyr-1463 the chain carries Phosphotyrosine. The residue at position 1466 (Thr-1466) is a Phosphothreonine. Ser-1473 bears the Phosphoserine mark. Phosphotyrosine is present on Tyr-1491. The residue at position 1494 (Ser-1494) is a Phosphoserine. Thr-1500 is subject to Phosphothreonine. Ser-1513 is modified (phosphoserine). Thr-1516 is modified (phosphothreonine). 7 positions are modified to phosphoserine: Ser-1541, Ser-1553, Ser-1573, Ser-1599, Ser-1602, Ser-1713, and Ser-1725. A phosphothreonine mark is found at Thr-1729 and Thr-1735.

The protein belongs to the TRAFAC class myosin-kinesin ATPase superfamily. Myosin family. Muscle myosin is a hexameric protein that consists of 2 heavy chain subunits (MHC), 2 alkali light chain subunits (MLC) and 2 regulatory light chain subunits (MLC-2). Interacts with SLC26A5.

It localises to the cytoplasm. The protein localises to the myofibril. Required for normal hearing. It plays a role in cochlear amplification of auditory stimuli, likely through the positive regulation of prestin (SLC26A5) activity and outer hair cell (OHC) electromotility. This is Myosin-1 (MYH1) from Bos taurus (Bovine).